The following is a 1248-amino-acid chain: Structural polyprotein (1248 aa).

A compositionally biased stretch (polar residues) spans 1–10 (MEFIPTQTFY). Residues 1-104 (MEFIPTQTFY…KKKKPGRRER (104 aa)) are disordered. Residues 36–68 (RKAGQLAQLISAVNKLTMRAVPQQKPRKNRKNK) are host transcription inhibition. Residues 60 to 72 (KPRKNRKNKKQKQ) show a composition bias toward basic residues. The short motif at 61 to 99 (PRKNRKNKKQKQKQQAPRNNMNQKKQPPKKKPAQKKKKP) is the Nuclear localization signal element. Over residues 73 to 85 (KQQAPRNNMNQKK) the composition is skewed to low complexity. The tract at residues 84–114 (KKQPPKKKPAQKKKKPGRRERMCMKIENDCI) is binding to the viral RNA. Residues 86–101 (QPPKKKPAQKKKKPGR) are compositionally biased toward basic residues. A ribosome-binding region spans residues 99 to 113 (PGRRERMCMKIENDC). C113 and C128 form a disulfide bridge. In terms of domain architecture, Peptidase S3 spans 113-261 (CIFEVKHEGK…KITPEGAEEW (149 aa)). The active-site Charge relay system is H139. The short motif at 144 to 154 (IDNADLAKLAF) is the Nuclear export signal element. An interaction with spike glycoprotein E2 region spans residues 155–160 (KRSSKY). D161 functions as the Charge relay system in the catalytic mechanism. Residues 183 to 193 (PEGYYNWHHGA) are dimerization of the capsid protein. The Charge relay system role is filled by S213. The dimerization of the capsid protein stretch occupies residues 219 to 223 (DNKGR). A functions as an uncleaved signal peptide for the precursor of protein E3/E2 region spans residues 262 to 274 (SLAIPVMCLLANT). The Extracellular segment spans residues 262–692 (SLAIPVMCLL…YYYELYPTMT (431 aa)). Cystine bridges form between C269–C278, C283–C287, C286–C318, C344–C450, C347–C353, C416–C430, C478–C591, C526–C550, and C528–C545. N-linked (GlcNAc...) asparagine; by host glycosylation occurs at N273. Interaction with host Mxra8 receptor stretches follow at residues 351-354 (HSCH) and 387-389 (HDW). Interaction with host Mxra8 receptor regions lie at residues 509–512 (QSGN) and 541–547 (VINNCKV). 2 N-linked (GlcNAc...) asparagine; by host glycosylation sites follow: N588 and N670. The helical transmembrane segment at 693-713 (VVVVSVASFVLLSMVGVAVGM) threads the bilayer. The Cytoplasmic portion of the chain corresponds to 714 to 748 (CMCARRRCITPYELTPGATVPFLLSLICCIRTAKA). The tract at residues 716 to 720 (CARRR) is interaction with the capsid protein. Residues C721, C741, and C742 are each lipidated (S-palmitoyl cysteine; by host). A transient transmembrane before p62-6K protein processing region spans residues 721–741 (CITPYELTPGATVPFLLSLIC). A disulfide bridge connects residues C721 and C742. Residues 749-763 (ATYQEAAVYLWNEQQ) are Extracellular-facing. Residues 764–784 (PLFWLQAIIPLAALIVLCNCL) traverse the membrane as a helical segment. Over 785 to 795 (RLLPCCCKTLT) the chain is Cytoplasmic. The helical transmembrane segment at 796–816 (FLAVMSVGAHTVSAYEHVTVI) threads the bilayer. Topologically, residues 817-1224 (PNTVGVPYKT…AMSWVQKITG (408 aa)) are extracellular. Disulfide bonds link C858-C923, C871-C903, and C877-C887. The segment at 893 to 910 (VYPFMWGGAYCFCDTENT) is E1 fusion peptide loop. 2 N-linked (GlcNAc...) asparagine; by host glycosylation sites follow: N950 and N1079. Disulfide bonds link C1068-C1080, C1110-C1185, C1115-C1189, and C1137-C1179. A helical transmembrane segment spans residues 1225–1245 (GVGLVVAVAALILIVVLCVSF). C1242 carries S-palmitoyl cysteine; by host lipidation. Topologically, residues 1246 to 1248 (SRH) are cytoplasmic.

As to quaternary structure, homodimer. Homomultimer. Interacts with host karyopherin KPNA4; this interaction allows the nuclear import of the viral capsid protein. Interacts with spike glycoprotein E2. Interacts with host IRAK1; the interaction leads to inhibition of IRAK1-dependent signaling. In terms of assembly, the precursor of protein E3/E2 and E1 form a heterodimer shortly after synthesis. Interacts with spike glycoprotein E2. The precursor of protein E3/E2 and E1 form a heterodimer shortly after synthesis. Processing of the precursor of protein E3/E2 into E2 and E3 results in a heterodimer of the spike glycoproteins E2 and E1. Spike at virion surface are constituted of three E2-E1 heterodimers. After target cell attachment and endocytosis, E1 change conformation to form homotrimers. Interacts with 6K protein. Interacts with host MXRA8; this interaction mediates virus entry. The interaction involves 2 adjacent E2-E1 heterodimers. As to quaternary structure, interacts with spike glycoprotein E1. Processing of the precursor of protein E3/E2 into E2 and E3 results in a heterodimer of the spike glycoproteins E2 and E1. Spike at virion surface are constituted of a trimer of E2-E1 heterodimers. Interacts with 6K protein. Interacts with host MXRA8; this interaction mediates virus entry. The interaction involves 2 adjacent E2-E1 heterodimers. In terms of assembly, oligomer. Interacts with spike glycoprotein E1. Interacts with spike glycoprotein E2. Post-translationally, structural polyprotein: Specific enzymatic cleavages in vivo yield mature proteins. Capsid protein is auto-cleaved during polyprotein translation, unmasking a signal peptide at the N-terminus of the precursor of E3/E2. The remaining polyprotein is then targeted to the host endoplasmic reticulum, where host signal peptidase cleaves it into pE2, 6K and E1 proteins. pE2 is further processed to mature E3 and E2 by host furin in trans-Golgi vesicle. Palmitoylated via thioester bonds. These palmitoylations may induce disruption of the C-terminus transmembrane. This would result in the reorientation of E2 C-terminus from lumenal to cytoplasmic side. In terms of processing, N-glycosylated. Post-translationally, palmitoylated via thioester bonds.

Its subcellular location is the virion. It is found in the host cytoplasm. The protein resides in the host cell membrane. The protein localises to the host nucleus. It localises to the virion membrane. Its subcellular location is the host Golgi apparatus. It is found in the host trans-Golgi network. The protein resides in the host endoplasmic reticulum. It carries out the reaction Autocatalytic release of the core protein from the N-terminus of the togavirus structural polyprotein by hydrolysis of a -Trp-|-Ser- bond.. Forms an icosahedral capsid with a T=4 symmetry composed of 240 copies of the capsid protein surrounded by a lipid membrane through which penetrate 80 spikes composed of trimers of E1-E2 heterodimers. The capsid protein binds to the viral RNA genome at a site adjacent to a ribosome binding site for viral genome translation following genome release. Possesses a protease activity that results in its autocatalytic cleavage from the nascent structural protein. Following its self-cleavage, the capsid protein transiently associates with ribosomes, and within several minutes the protein binds to viral RNA and rapidly assembles into icosahedric core particles. The resulting nucleocapsid eventually associates with the cytoplasmic domain of the spike glycoprotein E2 at the cell membrane, leading to budding and formation of mature virions. In case of infection, new virions attach to target cells and after clathrin-mediated endocytosis their membrane fuses with the host endosomal membrane. This leads to the release of the nucleocapsid into the cytoplasm, followed by an uncoating event necessary for the genomic RNA to become accessible. The uncoating might be triggered by the interaction of capsid proteins with ribosomes. Binding of ribosomes would release the genomic RNA since the same region is genomic RNA-binding and ribosome-binding. Specifically inhibits interleukin-1 receptor-associated kinase 1/IRAK1-dependent signaling during viral entry, representing a means by which the alphaviruses may evade innate immune detection and activation prior to viral gene expression. Degrades host cyclic GMP-AMP synthase (CGAS) thereby inhibiting the cGAS-STING pathway. Its function is as follows. Provides the signal sequence for the translocation of the precursor of protein E3/E2 to the host endoplasmic reticulum. Furin-cleaved E3 remains associated with spike glycoprotein E1 and mediates pH protection of the latter during the transport via the secretory pathway. After virion release from the host cell, the assembly protein E3 is gradually released in the extracellular space. Functionally, plays a role in viral attachment to target host cell, by binding to the cell receptor MXRA8. Synthesized as a p62 precursor which is processed by furin at the cell membrane just before virion budding, giving rise to E2-E1 heterodimer. The p62-E1 heterodimer is stable, whereas E2-E1 is unstable and dissociate at low pH. p62 is processed at the last step, presumably to avoid E1 fusion activation before its final export to cell surface. E2 C-terminus contains a transitory transmembrane that would be disrupted by palmitoylation, resulting in reorientation of the C-terminal tail from lumenal to cytoplasmic side. This step is critical since E2 C-terminus is involved in budding by interacting with capsid proteins. This release of E2 C-terminus in cytoplasm occurs lately in protein export, and precludes premature assembly of particles at the endoplasmic reticulum membrane. In terms of biological role, acts as a viroporin that participates in virus glycoprotein processing and transport to the plasma membrane, cell permeabilization and budding of viral particles. Disrupts the calcium homeostasis of the cell, probably at the endoplasmic reticulum level. This leads to cytoplasmic calcium elevation. Because of its lipophilic properties, the 6K protein is postulated to influence the selection of lipids that interact with the transmembrane domains of the glycoproteins, which, in turn, affects the deformability of the bilayer required for the extreme curvature that occurs as budding proceeds. Present in low amount in virions, about 3% compared to viral glycoproteins. Class II viral fusion protein. Fusion activity is inactive as long as E1 is bound to E2 in mature virion. After virus attachment to target cell via host MXRA8 and endocytosis, acidification of the endosome induce dissociation of E1/E2 heterodimer and concomitant trimerization of the E1 subunits. This E1 trimer is fusion active, and promotes release of viral nucleocapsid in cytoplasm after endosome and viral membrane fusion. Efficient fusion requires the presence of cholesterol and sphingolipid in the target membrane. The sequence is that of Structural polyprotein from Chikungunya virus (strain Nagpur) (CHIKV).